A 620-amino-acid polypeptide reads, in one-letter code: Chaperone protein HtpG (620 aa).

An a; substrate-binding region spans residues 1–334 (MTTTDTAPQT…SEDLPLNLSR (334 aa)). A b region spans residues 335-548 (EMLQNNPQLV…GQGPDRALER (214 aa)). The tract at residues 549-620 (MLAQQNRGGA…RINRLVLRAL (72 aa)) is c.

Belongs to the heat shock protein 90 family. As to quaternary structure, homodimer.

It is found in the cytoplasm. Its function is as follows. Molecular chaperone. Has ATPase activity. This is Chaperone protein HtpG from Rhodopseudomonas palustris (strain BisA53).